We begin with the raw amino-acid sequence, 404 residues long: Translation initiation factor eIF2B subunit gamma (404 aa).

The protein belongs to the eIF-2B gamma/epsilon subunits family. In terms of assembly, component of the translation initiation factor 2B (eIF2B) complex which is a heterodecamer of two sets of five different subunits: alpha, beta, gamma, delta and epsilon. Subunits alpha, beta and delta comprise a regulatory subcomplex and subunits epsilon and gamma comprise a catalytic subcomplex. Within the complex, the hexameric regulatory complex resides at the center, with the two heterodimeric catalytic subcomplexes bound on opposite sides.

The protein localises to the cytoplasm. Its subcellular location is the cytosol. Acts as a component of the translation initiation factor 2B (eIF2B) complex, which catalyzes the exchange of GDP for GTP on the eukaryotic initiation factor 2 (eIF2) complex gamma subunit. Its guanine nucleotide exchange factor activity is repressed when bound to eIF2 complex phosphorylated on the alpha subunit, thereby limiting the amount of methionyl-initiator methionine tRNA available to the ribosome and consequently global translation is repressed. This chain is Translation initiation factor eIF2B subunit gamma, found in Caenorhabditis elegans.